The sequence spans 483 residues: Siroheme synthase (483 aa).

The tract at residues 1-203 (MNYFPIFANL…RQNTLAEREL (203 aa)) is precorrin-2 dehydrogenase /sirohydrochlorin ferrochelatase. NAD(+) contacts are provided by residues 22–23 (AV) and 43–44 (KH). Serine 128 is subject to Phosphoserine. The interval 214–483 (GFVSLVGAGP…LGTGQEQQAA (270 aa)) is uroporphyrinogen-III C-methyltransferase. Proline 223 lines the S-adenosyl-L-methionine pocket. Aspartate 246 serves as the catalytic Proton acceptor. Catalysis depends on lysine 268, which acts as the Proton donor. S-adenosyl-L-methionine-binding positions include 299 to 301 (GGD), valine 304, 329 to 330 (TA), methionine 381, and glycine 410.

It in the N-terminal section; belongs to the precorrin-2 dehydrogenase / sirohydrochlorin ferrochelatase family. In the C-terminal section; belongs to the precorrin methyltransferase family.

The catalysed reaction is uroporphyrinogen III + 2 S-adenosyl-L-methionine = precorrin-2 + 2 S-adenosyl-L-homocysteine + H(+). It catalyses the reaction precorrin-2 + NAD(+) = sirohydrochlorin + NADH + 2 H(+). It carries out the reaction siroheme + 2 H(+) = sirohydrochlorin + Fe(2+). It functions in the pathway cofactor biosynthesis; adenosylcobalamin biosynthesis; precorrin-2 from uroporphyrinogen III: step 1/1. The protein operates within cofactor biosynthesis; adenosylcobalamin biosynthesis; sirohydrochlorin from precorrin-2: step 1/1. Its pathway is porphyrin-containing compound metabolism; siroheme biosynthesis; precorrin-2 from uroporphyrinogen III: step 1/1. It participates in porphyrin-containing compound metabolism; siroheme biosynthesis; siroheme from sirohydrochlorin: step 1/1. It functions in the pathway porphyrin-containing compound metabolism; siroheme biosynthesis; sirohydrochlorin from precorrin-2: step 1/1. In terms of biological role, multifunctional enzyme that catalyzes the SAM-dependent methylations of uroporphyrinogen III at position C-2 and C-7 to form precorrin-2 via precorrin-1. Then it catalyzes the NAD-dependent ring dehydrogenation of precorrin-2 to yield sirohydrochlorin. Finally, it catalyzes the ferrochelation of sirohydrochlorin to yield siroheme. The sequence is that of Siroheme synthase from Neisseria meningitidis serogroup C / serotype 2a (strain ATCC 700532 / DSM 15464 / FAM18).